A 281-amino-acid polypeptide reads, in one-letter code: Large ribosomal subunit protein uL2 (281 aa).

The disordered stretch occupies residues Arg-213–Lys-281.

The protein belongs to the universal ribosomal protein uL2 family. In terms of assembly, part of the 50S ribosomal subunit. Forms a bridge to the 30S subunit in the 70S ribosome.

In terms of biological role, one of the primary rRNA binding proteins. Required for association of the 30S and 50S subunits to form the 70S ribosome, for tRNA binding and peptide bond formation. It has been suggested to have peptidyltransferase activity; this is somewhat controversial. Makes several contacts with the 16S rRNA in the 70S ribosome. The protein is Large ribosomal subunit protein uL2 of Mycoplasmopsis pulmonis (strain UAB CTIP) (Mycoplasma pulmonis).